We begin with the raw amino-acid sequence, 401 residues long: L-rhamnonate dehydratase (401 aa).

Substrate contacts are provided by His29 and Arg55. Positions 222, 248, and 276 each coordinate Mg(2+). The active-site Proton acceptor is the His325. Glu345 lines the substrate pocket.

It belongs to the mandelate racemase/muconate lactonizing enzyme family. RhamD subfamily. In terms of assembly, homooctamer; tetramer of dimers. Mg(2+) serves as cofactor.

The catalysed reaction is L-rhamnonate = 2-dehydro-3-deoxy-L-rhamnonate + H2O. In terms of biological role, catalyzes the dehydration of L-rhamnonate to 2-keto-3-deoxy-L-rhamnonate (KDR). Can also dehydrate L-lyxonate, L-mannonate and D-gulonate, although less efficiently, but not 2-keto-4-hydroxyheptane-1,7-dioate. The sequence is that of L-rhamnonate dehydratase (rhmD) from Escherichia coli (strain K12).